The primary structure comprises 257 residues: Putative phosphatase YkrA (257 aa).

The Nucleophile role is filled by aspartate 9. Mg(2+) is bound at residue aspartate 9. Isoleucine 10 contributes to the phosphate binding site. Aspartate 11 contributes to the Mg(2+) binding site. Phosphate is bound by residues serine 43 to glycine 44 and lysine 183. A Mg(2+)-binding site is contributed by aspartate 206. Position 209 (asparagine 209) interacts with phosphate.

The protein belongs to the HAD-like hydrolase superfamily. Cof family. It depends on Mg(2+) as a cofactor.

This is Putative phosphatase YkrA (ykrA) from Bacillus subtilis (strain 168).